A 56-amino-acid polypeptide reads, in one-letter code: Small ribosomal subunit protein bS21 (56 aa).

The protein belongs to the bacterial ribosomal protein bS21 family.

The sequence is that of Small ribosomal subunit protein bS21 (rpsU) from Geobacillus stearothermophilus (Bacillus stearothermophilus).